We begin with the raw amino-acid sequence, 680 residues long: MYQNGKPDAPTILGQKRELEDVEIQDDDIQEVSKEDLLKDVRVRSIQFDELESKIEGLQNLAEEKLKVLATLVSWWPEILQQFSVVFQGNELKDFESEGVFSILEKFPELSYFNDAVKNNKTKALSIIQKLLSTVDSSTNSVSRDPFSVLSIDDSALTEKLNTINLDIDKILDELDTTRSQLHSIIKLPDRSSSFTLQCINESVRPQSTKVKEEATTSSKGKDEEKKVSTVEQRTQLQQLSRLQDQQNGLMESRSQSLKILDSNVNEMDKLIMERENALNNVETTNLKKYSSFLALKEAVSMTSEQLRVLEHLLSECSHEINVLSQQSKNFNGVFESSYQPLINDLDHQISVMQNDEKRINNAKTELSLSLEKKLEAKKQKEKVYKDKLDELANLETMVLEKKKAVATREAANKIRLVDLNDLELQKDLSTYLSKELASTEKAFRLVKQQTVKSSHSHYQELITKFSVEKEKAEQKYFLTMKSTDSLHAEVKLLRQKYQKTNEIISKMLNSQDTAVHRIIEFEDQLARLSSVRNNSIKQSTTFQVKKSSQKSTIQNLEEKVSYLQQFMDKNNATLTDLEFQCSDLSSSIDILSKQDEEHEKEKRKLKDTGVSTSAEELKTFRAMCKCSVCNFERWKDRIISLCGHGFCYQCIQKRIETRQRRCPICGRGFGASDVIPIHL.

A coiled-coil region spans residues 44-72 (RSIQFDELESKIEGLQNLAEEKLKVLATL). The interval 206–233 (PQSTKVKEEATTSSKGKDEEKKVSTVEQ) is disordered. Over residues 210-229 (KVKEEATTSSKGKDEEKKVS) the composition is skewed to basic and acidic residues. Coiled coils occupy residues 261-288 (LDSN…TNLK), 353-399 (MQND…ETMV), and 485-609 (DSLH…LKDT). The segment at 627–667 (CSVCNFERWKDRIISLCGHGFCYQCIQKRIETRQRRCPICG) adopts an RING-type zinc-finger fold.

Belongs to the BRE1 family. As to quaternary structure, component of the histone H2B ubiquitin ligase complex (HULC) composed of at least brl1, brl2, rhp6 and shf1.

It localises to the nucleus. It carries out the reaction S-ubiquitinyl-[E2 ubiquitin-conjugating enzyme]-L-cysteine + [acceptor protein]-L-lysine = [E2 ubiquitin-conjugating enzyme]-L-cysteine + N(6)-ubiquitinyl-[acceptor protein]-L-lysine.. It participates in protein modification; protein ubiquitination. In terms of biological role, E3 ubiquitin-protein ligase which belongs to the histone H2B ubiquitin ligase complex (HULC) which mediates monoubiquitination of histone H2B to form H2BK123ub1. H2BK123ub1 gives a specific tag for epigenetic transcriptional activation and is also a prerequisite for H3K4me and H3K79me formation. The chain is E3 ubiquitin-protein ligase brl2 (brl2) from Schizosaccharomyces pombe (strain 972 / ATCC 24843) (Fission yeast).